A 525-amino-acid polypeptide reads, in one-letter code: Cytochrome P450 714A2 (525 aa).

Over 1–3 (MES) the chain is Lumenal. Residues 4–24 (LVVHTVNAIWCIVIVGIFSVG) traverse the membrane as a helical; Signal-anchor for type III membrane protein segment. Topologically, residues 25 to 525 (YHVYGRAVVE…PQHGVVIRVV (501 aa)) are cytoplasmic. Residue C475 participates in heme binding.

The protein belongs to the cytochrome P450 family. Heme serves as cofactor. As to expression, expressed in the shoot apical meristem (SAM) and petioles of young leaves, in the leaf margin and petiole vein of cotyledons, and at low levels in the filaments of developing flowers. Not detected in siliques.

It localises to the endoplasmic reticulum membrane. Its function is as follows. Involved in the inactivation of early gibberellin (GA) intermediates. This chain is Cytochrome P450 714A2 (CYP714A2), found in Arabidopsis thaliana (Mouse-ear cress).